The primary structure comprises 171 residues: UPF0398 protein stu0232 (171 aa).

This sequence belongs to the UPF0398 family.

The sequence is that of UPF0398 protein stu0232 from Streptococcus thermophilus (strain ATCC BAA-250 / LMG 18311).